A 530-amino-acid chain; its full sequence is Autoinducer-2 kinase (530 aa).

Belongs to the FGGY kinase family.

It localises to the cytoplasm. The catalysed reaction is (S)-4,5-dihydroxypentane-2,3-dione + ATP = (2S)-2-hydroxy-3,4-dioxopentyl phosphate + ADP + H(+). In terms of biological role, catalyzes the phosphorylation of autoinducer-2 (AI-2) to phospho-AI-2, which subsequently inactivates the transcriptional regulator LsrR and leads to the transcription of the lsr operon. Phosphorylates the ring-open form of (S)-4,5-dihydroxypentane-2,3-dione (DPD), which is the precursor to all AI-2 signaling molecules, at the C5 position. This is Autoinducer-2 kinase from Salmonella choleraesuis (strain SC-B67).